Reading from the N-terminus, the 660-residue chain is MKAVIFAYHDMGCQGVQAVLDAGYEIAAIFTHADNPAENTFFGSVSRLAAELGIPVYAPDNVNHPIWVDRIAEFAPDIIFSFYYRNLLSEEILHLAPAGAFNLHGSLLPAYRGRAPLNWVLVNGESETGVTLHRMVKRADAGEIVASQRVAIAQDDVALTLHHKLCQAARQLLNSILPTMKCGDIPSVPQRESDATYYGRRRPEDGLIDWHKPVSTVHNLVRAVAAPWPGAFSYNGSQKFTIWSSRICPDAQGALPGSVISVSPLRVACADGALEIITGQAGDGITVQGSQLAQTLGLVAGARLNRPPATSGKRRIRVLILGVNGFIGNHLTERLLNEENYEVYGMDIGSNAISRFLLHPRFHFVEGDISIHSEWIEYHVKKCDVVLPLVAIATPIEYTRNPLRVFELDFEENLRIIRYCVKYRKRVVFPSTSEVYGMCTDASFDEDKSNLIVGPVNKPRWIYSVSKQLLDRVIWAYGEKEGLRFTLFRPFNWMGPRLDSLNAARIGSSRAITQLILNLVEGTPIKLIDGGQQKRCFTDIRDGIEALFRIIVNEGDRCDGKIINIGNPDNEASIQELATLLLDSFDKHPLRCHFPPFAGFQVVESRSYYGKGYQDVAHRKPSIDNARRCLGWEPSIAMRDTVEETLDFFLRSVDVAERAS.

A formyltransferase ArnAFT region spans residues 1–304 (MKAVIFAYHD…TLGLVAGARL (304 aa)). His104 acts as the Proton donor; for formyltransferase activity in catalysis. (6R)-10-formyltetrahydrofolate is bound by residues Arg114 and 136–140 (VKRAD). Residues 314-660 (RRIRVLILGV…RSVDVAERAS (347 aa)) form a dehydrogenase ArnADH region. Residues Asp347 and 368-369 (DI) each bind NAD(+). UDP-alpha-D-glucuronate is bound by residues Ala393, Tyr398, and 432-433 (TS). The active-site Proton acceptor; for decarboxylase activity is the Glu434. UDP-alpha-D-glucuronate-binding positions include Arg460, Asn492, 526–535 (KLIDGGQQKR), and Tyr613. The active-site Proton donor; for decarboxylase activity is Arg619.

It in the N-terminal section; belongs to the Fmt family. UDP-L-Ara4N formyltransferase subfamily. The protein in the C-terminal section; belongs to the NAD(P)-dependent epimerase/dehydratase family. UDP-glucuronic acid decarboxylase subfamily. As to quaternary structure, homohexamer, formed by a dimer of trimers.

The catalysed reaction is UDP-alpha-D-glucuronate + NAD(+) = UDP-beta-L-threo-pentopyranos-4-ulose + CO2 + NADH. It carries out the reaction UDP-4-amino-4-deoxy-beta-L-arabinose + (6R)-10-formyltetrahydrofolate = UDP-4-deoxy-4-formamido-beta-L-arabinose + (6S)-5,6,7,8-tetrahydrofolate + H(+). The protein operates within nucleotide-sugar biosynthesis; UDP-4-deoxy-4-formamido-beta-L-arabinose biosynthesis; UDP-4-deoxy-4-formamido-beta-L-arabinose from UDP-alpha-D-glucuronate: step 1/3. It participates in nucleotide-sugar biosynthesis; UDP-4-deoxy-4-formamido-beta-L-arabinose biosynthesis; UDP-4-deoxy-4-formamido-beta-L-arabinose from UDP-alpha-D-glucuronate: step 3/3. Its pathway is bacterial outer membrane biogenesis; lipopolysaccharide biosynthesis. Functionally, bifunctional enzyme that catalyzes the oxidative decarboxylation of UDP-glucuronic acid (UDP-GlcUA) to UDP-4-keto-arabinose (UDP-Ara4O) and the addition of a formyl group to UDP-4-amino-4-deoxy-L-arabinose (UDP-L-Ara4N) to form UDP-L-4-formamido-arabinose (UDP-L-Ara4FN). The modified arabinose is attached to lipid A and is required for resistance to polymyxin and cationic antimicrobial peptides. The chain is Bifunctional polymyxin resistance protein ArnA from Salmonella dublin (strain CT_02021853).